A 335-amino-acid chain; its full sequence is DNA primase small subunit PriS (335 aa).

Catalysis depends on residues D96, D98, and D243.

The protein belongs to the eukaryotic-type primase small subunit family. In terms of assembly, heterodimer of a small subunit (PriS) and a large subunit (PriL). Mg(2+) is required as a cofactor. The cofactor is Mn(2+).

Its function is as follows. Catalytic subunit of DNA primase, an RNA polymerase that catalyzes the synthesis of short RNA molecules used as primers for DNA polymerase during DNA replication. The small subunit contains the primase catalytic core and has DNA synthesis activity on its own. Binding to the large subunit stabilizes and modulates the activity, increasing the rate of DNA synthesis while decreasing the length of the DNA fragments, and conferring RNA synthesis capability. The DNA polymerase activity may enable DNA primase to also catalyze primer extension after primer synthesis. May also play a role in DNA repair. The polypeptide is DNA primase small subunit PriS (Archaeoglobus fulgidus (strain ATCC 49558 / DSM 4304 / JCM 9628 / NBRC 100126 / VC-16)).